The primary structure comprises 66 residues: Large ribosomal subunit protein uL29 (66 aa).

This sequence belongs to the universal ribosomal protein uL29 family. In terms of assembly, part of the 50S ribosomal subunit.

In Bacillus subtilis (strain 168), this protein is Large ribosomal subunit protein uL29 (rpmC).